Reading from the N-terminus, the 264-residue chain is Putative hydro-lyase Cgl2544/cg2803 (264 aa).

Belongs to the D-glutamate cyclase family.

This Corynebacterium glutamicum (strain ATCC 13032 / DSM 20300 / JCM 1318 / BCRC 11384 / CCUG 27702 / LMG 3730 / NBRC 12168 / NCIMB 10025 / NRRL B-2784 / 534) protein is Putative hydro-lyase Cgl2544/cg2803.